A 492-amino-acid polypeptide reads, in one-letter code: MNRLPLRARVLSECFRSKSLDPVAVVEHSLAQIESHKHLNAFVRVSSEKALEQAKQSKDRHDANSPKSILDGVTIAVKDNFCTKGIHTTCASRMLQNFIPTYDATVVERLQAHGAVIVGKTNLDQFGMGSGCIDSIFGPTRNNWSEDTNDDRFRIAGGSSGGSAVAVAAGLCYAALGSDTGGSTRNPASYCGIVGLKPTYGLVSRHGLIPLVNSMDVPGIMTRTVDDCASMLNAVAGPDVYDSTTVKRPFESIAPLEKQMSLKGVRIGIPIEYHCDGLEKEVLETWTVIADMLESAGATVKAVSLPNTASSIFVYSILNQCEVASNMSRYDGIEYGHRSQEDSSTEQLYARTRAEGFNGVVKNRILSGNYFLLRENYDKYFQKALKVRRLIADDFVRAFKEVDVLLTPTTLSEAPLYKDFVQSNNRDQCAVQDFCTQPANMAGIPAISIPIRLSSRQLPISLQLMGDHFTERNLLQVANWIEKQVDFVANYS.

Active-site charge relay system residues include Lys78 and Ser159. The Acyl-ester intermediate role is filled by Ser183.

It belongs to the amidase family. GatA subfamily. Subunit of the heterotrimeric GatCAB amidotransferase (AdT) complex, composed of A, B and C subunits.

The protein localises to the mitochondrion. The catalysed reaction is L-glutamyl-tRNA(Gln) + L-glutamine + ATP + H2O = L-glutaminyl-tRNA(Gln) + L-glutamate + ADP + phosphate + H(+). Its function is as follows. Allows the formation of correctly charged Gln-tRNA(Gln) through the transamidation of misacylated Glu-tRNA(Gln) in the mitochondria. The reaction takes place in the presence of glutamine and ATP through an activated gamma-phospho-Glu-tRNA(Gln). This is Glutamyl-tRNA(Gln) amidotransferase subunit A, mitochondrial from Anopheles gambiae (African malaria mosquito).